Reading from the N-terminus, the 201-residue chain is Holliday junction branch migration complex subunit RuvA (201 aa).

The interval Met1–Val63 is domain I. The interval Glu64 to Ser142 is domain II. Residues Gly143–Glu153 form a flexible linker region. The segment at Glu153 to Arg201 is domain III.

The protein belongs to the RuvA family. As to quaternary structure, homotetramer. Forms an RuvA(8)-RuvB(12)-Holliday junction (HJ) complex. HJ DNA is sandwiched between 2 RuvA tetramers; dsDNA enters through RuvA and exits via RuvB. An RuvB hexamer assembles on each DNA strand where it exits the tetramer. Each RuvB hexamer is contacted by two RuvA subunits (via domain III) on 2 adjacent RuvB subunits; this complex drives branch migration. In the full resolvosome a probable DNA-RuvA(4)-RuvB(12)-RuvC(2) complex forms which resolves the HJ.

The protein resides in the cytoplasm. Functionally, the RuvA-RuvB-RuvC complex processes Holliday junction (HJ) DNA during genetic recombination and DNA repair, while the RuvA-RuvB complex plays an important role in the rescue of blocked DNA replication forks via replication fork reversal (RFR). RuvA specifically binds to HJ cruciform DNA, conferring on it an open structure. The RuvB hexamer acts as an ATP-dependent pump, pulling dsDNA into and through the RuvAB complex. HJ branch migration allows RuvC to scan DNA until it finds its consensus sequence, where it cleaves and resolves the cruciform DNA. The protein is Holliday junction branch migration complex subunit RuvA of Cutibacterium acnes (strain DSM 16379 / KPA171202) (Propionibacterium acnes).